Reading from the N-terminus, the 214-residue chain is MLDTSQEIMKGTTTVGLIFDGGVVLATEMRATMGNMIASKRAKKIYQITPRIGLTTAGGVGDAQQLVRILQVECNLFEMRRGKTMSVGAASTLLSNYLNQNRYYPYYVQLLMGGFDDEGPSVYSVDAMGGATKEEDIVATGSGSPFAYGVLEDQYRAGMKEDDAKDLAVRAVRSAMRRDSASGEDIMVVVITKDKYEEHIESGLQRPSAARPTL.

A propeptide spans 1-11 (MLDTSQEIMKG) (removed in mature form; by autocatalysis). Catalysis depends on T12, which acts as the Nucleophile.

Belongs to the peptidase T1B family. In terms of assembly, the 20S proteasome core is composed of 14 alpha and 14 beta subunits that assemble into four stacked heptameric rings, resulting in a barrel-shaped structure. The two inner rings, each composed of seven catalytic beta subunits, are sandwiched by two outer rings, each composed of seven alpha subunits. The catalytic chamber with the active sites is on the inside of the barrel. Has a gated structure, the ends of the cylinder being occluded by the N-termini of the alpha-subunits. Is capped at one or both ends by the proteasome regulatory ATPase, PAN.

The protein resides in the cytoplasm. It catalyses the reaction Cleavage of peptide bonds with very broad specificity.. With respect to regulation, the formation of the proteasomal ATPase PAN-20S proteasome complex, via the docking of the C-termini of PAN into the intersubunit pockets in the alpha-rings, triggers opening of the gate for substrate entry. Interconversion between the open-gate and close-gate conformations leads to a dynamic regulation of the 20S proteasome proteolysis activity. In terms of biological role, component of the proteasome core, a large protease complex with broad specificity involved in protein degradation. This is Proteasome subunit beta from Methanoculleus marisnigri (strain ATCC 35101 / DSM 1498 / JR1).